The following is a 700-amino-acid chain: pH-response regulator protein palI/prr-5 (700 aa).

The Cytoplasmic segment spans residues 1–8; sequence MLRPATPL. Residues 9–29 traverse the membrane as a helical segment; that stretch reads AVLLFAAFGLLTLATISTPII. Over 30–90 the chain is Extracellular; sequence KQIPLSSFEI…PRATRSTLSS (61 aa). The helical transmembrane segment at 91–111 threads the bilayer; the sequence is ILIVHPVAALITLINFVLAIV. Over 112–123 the chain is Cytoplasmic; sequence AHFHSPSHSARY. A helical membrane pass occupies residues 124–144; the sequence is LLILFIVSFVDFIVCLLCFLV. Residues 145–152 are Extracellular-facing; sequence DVLLFIPH. Residues 153–173 form a helical membrane-spanning segment; it reads LSWGSYIVVAATILVAFCGLV. Topologically, residues 174–700 are cytoplasmic; it reads TCAMRRTLVN…GNMPRAAGPR (527 aa). Disordered stretches follow at residues 226-491, 507-560, and 573-700; these read SGAN…GIRD, VPDP…PISE, and DVDP…AGPR. Basic and acidic residues predominate over residues 234-252; it reads KLPEFTTFEKKDDRSEERI. Over residues 320 to 378 the composition is skewed to gly residues; the sequence is GRGGMPPGGYRGRGGFPGPGRGGGPPQNGRGGYGPPGRGRGGYGPPPRGYGGPGPRGGR. Polar residues predominate over residues 414–424; that stretch reads SPYANRQQSPG. Polar residues-rich tracts occupy residues 593 to 603 and 615 to 637; these read SMQSPPASNSY and ESENSNFTSISQRGINPRWNSAN. A compositionally biased stretch (low complexity) spans 657–671; that stretch reads VVPRRPVNRPGAGPA.

It belongs to the palI/RIM9 family.

It is found in the cell membrane. Its function is as follows. Required for the proteolytic cleavage of the transcription factor pacc-1 in response to alkaline ambient pH. The chain is pH-response regulator protein palI/prr-5 (prr-5) from Neurospora crassa (strain ATCC 24698 / 74-OR23-1A / CBS 708.71 / DSM 1257 / FGSC 987).